Reading from the N-terminus, the 200-residue chain is 7-methyl-GTP pyrophosphatase (200 aa).

The active-site Proton acceptor is Asp75.

Belongs to the Maf family. YceF subfamily. It depends on a divalent metal cation as a cofactor.

The protein resides in the cytoplasm. The catalysed reaction is N(7)-methyl-GTP + H2O = N(7)-methyl-GMP + diphosphate + H(+). Its function is as follows. Nucleoside triphosphate pyrophosphatase that hydrolyzes 7-methyl-GTP (m(7)GTP). May have a dual role in cell division arrest and in preventing the incorporation of modified nucleotides into cellular nucleic acids. The sequence is that of 7-methyl-GTP pyrophosphatase from Hydrogenovibrio crunogenus (strain DSM 25203 / XCL-2) (Thiomicrospira crunogena).